The chain runs to 501 residues: Splicing factor 3A subunit 3 (501 aa).

Residue Met-1 is modified to N-acetylmethionine. Phosphoserine is present on residues Ser-54 and Ser-121. The Nuclear localization signal signature appears at 175-179; it reads KERKN. 2 positions are modified to phosphoserine: Ser-295 and Ser-299. The segment covering 343–354 has biased composition (basic and acidic residues); the sequence is ENVQRKQARTGE. Residues 343–374 form a disordered region; the sequence is ENVQRKQARTGEEREEEEEEQISESESEDEEN. Positions 355–374 are enriched in acidic residues; the sequence is EREEEEEEQISESESEDEEN. Residues Ser-365, Ser-367, and Ser-369 each carry the phosphoserine modification. The segment at 406-437 adopts a Matrin-type zinc-finger fold; that stretch reads YNCEICGNYTYRGPKAFQRHFAEWRHAHGMRC. At Thr-475 the chain carries Phosphothreonine.

Belongs to the SF3A3 family. Component of the 17S U2 SnRNP complex, a ribonucleoprotein complex that contains small nuclear RNA (snRNA) U2 and a number of specific proteins. Part of the SF3A subcomplex of the 17S U2 SnRNP complex which is composed of three subunits; SF3A3/SAP61, SF3A2/SAP62 and SF3A1/SAP114. SF3A associates with the splicing factor SF3B and a 12S RNA unit to form the mature 17S U2 small nuclear ribonucleoprotein complex (17S U2 snRNP). Identified in the spliceosome 'E' complex, a precursor of the spliceosome 'A' complex. Identified in the spliceosome 'A' and 'B' complexes. Identified in the spliceosome 'C' complex. In terms of tissue distribution, ubiquitous.

The protein localises to the nucleus speckle. It localises to the nucleus. Its function is as follows. Component of the 17S U2 SnRNP complex of the spliceosome, a large ribonucleoprotein complex that removes introns from transcribed pre-mRNAs. The 17S U2 SnRNP complex (1) directly participates in early spliceosome assembly and (2) mediates recognition of the intron branch site during pre-mRNA splicing by promoting the selection of the pre-mRNA branch-site adenosine, the nucleophile for the first step of splicing. Within the 17S U2 SnRNP complex, SF3A3 is part of the SF3A subcomplex that contributes to the assembly of the 17S U2 snRNP, and the subsequent assembly of the pre-spliceosome 'E' complex and the pre-catalytic spliceosome 'A' complex. Involved in pre-mRNA splicing as a component of pre-catalytic spliceosome 'B' complexes. The chain is Splicing factor 3A subunit 3 (SF3A3) from Homo sapiens (Human).